Consider the following 106-residue polypeptide: Iron-sulfur cluster assembly protein CyaY (106 aa).

Belongs to the frataxin family.

In terms of biological role, involved in iron-sulfur (Fe-S) cluster assembly. May act as a regulator of Fe-S biogenesis. This is Iron-sulfur cluster assembly protein CyaY from Cronobacter sakazakii (strain ATCC BAA-894) (Enterobacter sakazakii).